A 123-amino-acid polypeptide reads, in one-letter code: Alpha-lactalbumin (123 aa).

Residues 1–123 (KQFTKCELSQ…KLEQWLCEEL (123 aa)) form the C-type lysozyme domain. Disulfide bonds link Cys-6–Cys-120, Cys-28–Cys-111, Cys-61–Cys-77, and Cys-73–Cys-91. Ca(2+) is bound by residues Lys-79, Asp-82, Asp-84, Asp-87, and Asp-88.

It belongs to the glycosyl hydrolase 22 family. As to quaternary structure, lactose synthase (LS) is a heterodimer of a catalytic component, beta1,4-galactosyltransferase (beta4Gal-T1) and a regulatory component, alpha-lactalbumin (LA). As to expression, mammary gland specific. Secreted in milk.

It localises to the secreted. Its function is as follows. Regulatory subunit of lactose synthase, changes the substrate specificity of galactosyltransferase in the mammary gland making glucose a good acceptor substrate for this enzyme. This enables LS to synthesize lactose, the major carbohydrate component of milk. In other tissues, galactosyltransferase transfers galactose onto the N-acetylglucosamine of the oligosaccharide chains in glycoproteins. The sequence is that of Alpha-lactalbumin (LALBA) from Equus asinus (Donkey).